A 58-amino-acid chain; its full sequence is UPF0391 membrane protein Bxeno_A2959 (58 aa).

The next 2 membrane-spanning stretches (helical) occupy residues 4-24 (WALFFAVVAVIAGVLGFTGVA) and 33-53 (FLFIVFVILCVVFLVLGFVVT).

Belongs to the UPF0391 family.

It localises to the cell membrane. This chain is UPF0391 membrane protein Bxeno_A2959, found in Paraburkholderia xenovorans (strain LB400).